The chain runs to 143 residues: Transcriptional regulator SlyA (143 aa).

An HTH marR-type domain is found at 2-135 (ESTLGSDLAR…LANLIERLEQ (134 aa)). A DNA-binding region (H-T-H motif) is located at residues 49-72 (QIQLAKAIGIEQPSLVRTLDQLED).

This sequence belongs to the SlyA family. As to quaternary structure, homodimer.

Functionally, transcription regulator that can specifically activate or repress expression of target genes. The sequence is that of Transcriptional regulator SlyA from Edwardsiella ictaluri (strain 93-146).